The sequence spans 478 residues: E3 ubiquitin-protein ligase makorin-1 (478 aa).

C3H1-type zinc fingers lie at residues 51–78 (WTKQ…HDLS), 80–107 (SQSA…HTKP), and 204–231 (EMKK…HGDA). A makorin-type Cys-His region spans residues 232-259 (CDMCGLQVLHPVDAAQRSQHIKSCIEAH). An RING-type zinc finger spans residues 277–331 (CGICMEVVYEKANPSERRFGILSNCNHTYCLKCIRKWRSAKQFESKIIKSCPECR). Residues 360–389 (AMSNKPCRYFDEGRGSCPFGGNCFYKHAYP) form a C3H1-type 4 zinc finger.

In terms of assembly, interacts with p53/TP53 and CDKN1A. Interacts with TERT, modulating telomere length homeostasis. In terms of processing, auto-ubiquitinated; which leads to proteasomal degradation.

The enzyme catalyses S-ubiquitinyl-[E2 ubiquitin-conjugating enzyme]-L-cysteine + [acceptor protein]-L-lysine = [E2 ubiquitin-conjugating enzyme]-L-cysteine + N(6)-ubiquitinyl-[acceptor protein]-L-lysine.. It functions in the pathway protein modification; protein ubiquitination. In terms of biological role, E3 ubiquitin ligase catalyzing the covalent attachment of ubiquitin moieties onto substrate proteins. These substrates include FILIP1, p53/TP53, CDKN1A and TERT. Keeps cells alive by suppressing p53/TP53 under normal conditions, but stimulates apoptosis by repressing CDKN1A under stress conditions. Acts as a negative regulator of telomerase. Has negative and positive effects on RNA polymerase II-dependent transcription. This is E3 ubiquitin-protein ligase makorin-1 (MKRN1) from Notamacropus eugenii (Tammar wallaby).